Reading from the N-terminus, the 118-residue chain is Putative pterin-4-alpha-carbinolamine dehydratase (118 aa).

Belongs to the pterin-4-alpha-carbinolamine dehydratase family.

The catalysed reaction is (4aS,6R)-4a-hydroxy-L-erythro-5,6,7,8-tetrahydrobiopterin = (6R)-L-erythro-6,7-dihydrobiopterin + H2O. The chain is Putative pterin-4-alpha-carbinolamine dehydratase from Xanthomonas oryzae pv. oryzae (strain MAFF 311018).